A 113-amino-acid chain; its full sequence is UPF0482 protein KPK_2871 (113 aa).

Residues 1–28 form the signal peptide; the sequence is MNMTLNKRWCLTAILALSAVVYTSSSFA. The segment at 38-61 is disordered; that stretch reads GDSAQSRQQASMEKEQWNDTRSLR. The segment covering 39-48 has biased composition (polar residues); it reads DSAQSRQQAS. Residues 49-59 show a composition bias toward basic and acidic residues; it reads MEKEQWNDTRS.

It belongs to the UPF0482 family.

The chain is UPF0482 protein KPK_2871 from Klebsiella pneumoniae (strain 342).